Reading from the N-terminus, the 46-residue chain is uncharacterized protein (46 aa).

This is an uncharacterized protein from Bacillus subtilis (strain 168).